Here is a 209-residue protein sequence, read N- to C-terminus: BAG family molecular chaperone regulator 1 (209 aa).

The region spanning 7–84 is the Ubiquitin-like domain; the sequence is CSSVQTIVDI…IIVMGGKNAM (78 aa). Residues 107–193 form the BAG domain; the sequence is TYDVNLKDVA…TLLNQNDALL (87 aa).

In terms of assembly, homodimer or homotetramer.

Its function is as follows. May inhibit the chaperone activity of HSP70/HSC70 by promoting substrate release in an ATP-dependent manner. This is BAG family molecular chaperone regulator 1 (bag-1) from Caenorhabditis briggsae.